A 104-amino-acid chain; its full sequence is Vegetative-specific protein H7 (104 aa).

Residues 43–97 (IQRARNALKMTQKELAFKINERPGVINEYESGSAIPSQAVLSKLEKALNVKLRGK) form the HTH cro/C1-type domain. The segment at residues 54–73 (QKELAFKINERPGVINEYES) is a DNA-binding region (H-T-H motif).

This chain is Vegetative-specific protein H7 (cinD-1), found in Dictyostelium discoideum (Social amoeba).